We begin with the raw amino-acid sequence, 273 residues long: Cytoplasmic phosphatidylinositol transfer protein 1 (273 aa).

The interval 244–273 (QAETNEKIHNTSGGANAAANAKEANDGDID) is disordered.

This sequence belongs to the PtdIns transfer protein family. PI transfer class IIB subfamily.

Functionally, phosphatidylinositol transfer proteins mediate the monomeric transport of lipids by shielding a lipid from the aqueous environment and binding the lipid in a hydrophobic cavity. The protein is Cytoplasmic phosphatidylinositol transfer protein 1 (rdgBbeta) of Drosophila melanogaster (Fruit fly).